A 217-amino-acid polypeptide reads, in one-letter code: uncharacterized protein (217 aa).

Residues 98-203 (QRRQYVRTDA…GDQQALLQYC (106 aa)) form the PilZ domain.

This is an uncharacterized protein from Bacillus subtilis (strain 168).